Here is a 489-residue protein sequence, read N- to C-terminus: Protein LMBR1L (489 aa).

Residues 1–21 (MEAPDYEVLSVREQLFHERIR) lie on the Extracellular side of the membrane. Positions 1–59 (MEAPDYEVLSVREQLFHERIRECIISTLLFATLYILCHIFLTRFKKPAEFTTVDDEDAT) are interaction with LGB. The interval 1–76 (MEAPDYEVLS…LCTFTLAIAL (76 aa)) is LCN1-binding. Residues 22 to 42 (ECIISTLLFATLYILCHIFLT) traverse the membrane as a helical segment. The Cytoplasmic portion of the chain corresponds to 43–66 (RFKKPAEFTTVDDEDATVNKIALE). The helical transmembrane segment at 67–87 (LCTFTLAIALGAVLLLPFSII) threads the bilayer. Residues 88–114 (SNEVLLSLPRNYYIQWLNGSLIHGLWN) are Extracellular-facing. The chain crosses the membrane as a helical span at residues 115 to 135 (LVFLFSNLSLIFLMPFAYFFT). The Cytoplasmic portion of the chain corresponds to 136–154 (ESEGFAGSRKGVLGRVYET). A helical membrane pass occupies residues 155–175 (VVMLMLLTLLVLGMVWVASAI). Residues 176–196 (VDKNKANRESLYDFWEYYLPY) are Extracellular-facing. A helical transmembrane segment spans residues 197 to 217 (LYSCISFLGVLLLLVCTPLGL). The Cytoplasmic segment spans residues 218 to 305 (ARMFSVTGKL…NLGYPLAMLC (88 aa)). The helical transmembrane segment at 306–326 (LLVLTGLSVLIVAIHILELLI) threads the bilayer. The Extracellular segment spans residues 327 to 350 (DEAAMPRGMQGTSLGQVSFSKLGS). Residues 351–371 (FGAVIQVVLIFYLMVSSVVGF) traverse the membrane as a helical segment. Residues 372 to 388 (YSSPLFRSLRPRWHDTA) lie on the Cytoplasmic side of the membrane. The helical transmembrane segment at 389–409 (MTQIIGNCVCLLVLSSALPVF) threads the bilayer. The Extracellular segment spans residues 410–431 (SRTLGLTRFDLLGDFGRFNWLG). A helical membrane pass occupies residues 432–452 (NFYIVFLYNAAFAGLTTLCLV). The Cytoplasmic portion of the chain corresponds to 453–489 (KTFTAAVRAELIRAFGLDRLPLPVSGFPQASRKTQHQ).

Belongs to the LIMR family. In terms of assembly, dimer. Can also form higher oligomers. Interacts with LCN1; this interaction mediates the endocytosis of LCN1. Interacts with UBAC2, FAF2, VCP, AMFR, ZNRF3, CTNNB1, LRP6, GSK3A and GSK3B. Interacts with DVL2 and RNF43. Interaction with SCGB1A1 has been observed in PubMed:16423471, but not in PubMed:23964685. Interaction with LGB which mediates the endocytosis of LGB has been observed in PubMed:17991420, but not in PubMed:23964685. As to expression, expressed in testis, pituitary gland, adrenal gland, trachea, placenta, thymus, cerebellum, stomach, mammary gland, spinal cord. A weaker expression is detected in colon, pancreas, and prostate.

The protein resides in the cell membrane. It is found in the endoplasmic reticulum membrane. Plays an essential role in lymphocyte development by negatively regulating the canonical Wnt signaling pathway. In association with UBAC2 and E3 ubiquitin-protein ligase AMFR, promotes the ubiquitin-mediated degradation of CTNNB1 and Wnt receptors FZD6 and LRP6. LMBR1L stabilizes the beta-catenin destruction complex that is required for regulating CTNNB1 levels. Acts as a LCN1 receptor and can mediate its endocytosis. This is Protein LMBR1L (LMBR1L) from Homo sapiens (Human).